A 195-amino-acid chain; its full sequence is Apoptosis-associated speck-like protein containing a CARD (195 aa).

Positions 1–91 (MGRARDAILD…AGQLQAATHQ (91 aa)) constitute a Pyrin domain. Residues K55 and K174 each participate in a glycyl lysine isopeptide (Lys-Gly) (interchain with G-Cter in ubiquitin) cross-link. Residues 107–195 (AAKPGLHFID…SYLVEDLERS (89 aa)) enclose the CARD domain. S195 is subject to Phosphoserine.

In terms of assembly, self-associates; enforced oligomerization induces apoptosis, NF-kappa-B regulation and interleukin-1 beta secretion. Homooligomers can form disk-like particles of approximately 12 nm diameter and approximately 1 nm height. Next to isoform 1, also isoform 2 and isoform 3 may be involved in oligomerization leading to functional regulation. Component of several inflammasomes containing one pattern recognition receptor/sensor, such as NLRP1, NLRP2, NLRP3, NLRP6, NLRC4, AIM2, MEFV or NOD2, and probably NLRC4, NLRP12 or IFI16. Major component of the ASC pyroptosome, a 1-2 um supramolecular assembly (one per macrophage cell) which consists of oligomerized PYCARD dimers and CASP1. Interacts with CASP1 (precursor form); the interaction induces activation of CASP1 leading to the processing of interleukin-1 beta; PYCARD competes with RIPK2 for binding to CASP1. Interacts with NLRP3; the interaction requires the homooligomerization of NLRP3. Interacts with NLRP2, NLRC4, MEFV, CARD16, AIM2, IFI16, NOD2, RIGI, RIPK2, PYDC1, PYDC2, NLRP10, CASP8, CHUK, IKBKB and BAX. Component of the AIM2 PANoptosome complex, a multiprotein complex that drives inflammatory cell death (PANoptosis). Post-translationally, phosphorylated. In terms of processing, 'Lys-63'-linked polyubiquitination by TRAF3 is critical for speck formation and inflammasome activation. 'Lys-63'-linked deubiquitinated by USP50; a crucial step for NLRP3-mediated inflammasome activation. 'Lys-63'-linked polyubiquitination by PELI1 is also critical for speck formation and inflammasome activation. Deubiquitinated by USP3 that cleaves 'Lys-48'-linked ubiquitin chains and strengthens its stability by blocking proteasomal degradation. As to expression, widely expressed at low levels. Detected in peripheral blood leukocytes, lung, small intestine, spleen, thymus, colon and at lower levels in placenta, liver and kidney. Very low expression in skeletal muscle, heart and brain. Expressed in lung epithelial cells (at protein level). Detected in the leukemia cell lines HL-60 and U-937, but not in Jurkat T-cell lymphoma and Daudi Burkitt's lymphoma. Detected in the melanoma cell line WM35, but not in WM793. Not detected in HeLa cervical carcinoma cells and MOLT-4 lymphocytic leukemia cells.

The protein resides in the cytoplasm. Its subcellular location is the inflammasome. The protein localises to the endoplasmic reticulum. It is found in the mitochondrion. It localises to the nucleus. The protein resides in the golgi apparatus membrane. Functionally, functions as a key mediator in apoptosis and inflammation. Promotes caspase-mediated apoptosis involving predominantly caspase-8 and also caspase-9 in a probable cell type-specific manner. Involved in activation of the mitochondrial apoptotic pathway, promotes caspase-8-dependent proteolytic maturation of BID independently of FADD in certain cell types and also mediates mitochondrial translocation of BAX and activates BAX-dependent apoptosis coupled to activation of caspase-9, -2 and -3. Involved in innate immune response by acting as an integral adapter in the assembly of various inflammasomes (NLRP1, NLRP2, NLRP3, NLRP6, AIM2 and probably IFI16) which recruit and activate caspase-1 leading to processing and secretion of pro-inflammatory cytokines. Caspase-1-dependent inflammation leads to macrophage pyroptosis, a form of cell death. The function as activating adapter in different types of inflammasomes is mediated by the pyrin and CARD domains and their homotypic interactions. Clustered PYCARD nucleates the formation of caspase-1 filaments through the interaction of their respective CARD domains, acting as a platform for of caspase-1 polymerization. In the NLRP1 and NLRC4 inflammasomes seems not be required but facilitates the processing of procaspase-1. In cooperation with NOD2 involved in an inflammasome activated by bacterial muramyl dipeptide leading to caspase-1 activation. May be involved in RIGI-triggered pro-inflammatory responses and inflammasome activation. In collaboration with AIM2 which detects cytosolic double-stranded DNA may also be involved in a caspase-1-independent cell death that involves caspase-8. In adaptive immunity may be involved in maturation of dendritic cells to stimulate T-cell immunity and in cytoskeletal rearrangements coupled to chemotaxis and antigen uptake may be involved in post-transcriptional regulation of the guanine nucleotide exchange factor DOCK2; the latter function is proposed to involve the nuclear form. Also involved in transcriptional activation of cytokines and chemokines independent of the inflammasome; this function may involve AP-1, NF-kappa-B, MAPK and caspase-8 signaling pathways. For regulation of NF-kappa-B activating and inhibiting functions have been reported. Modulates NF-kappa-B induction at the level of the IKK complex by inhibiting kinase activity of CHUK and IKBK. Proposed to compete with RIPK2 for association with CASP1 thereby down-regulating CASP1-mediated RIPK2-dependent NF-kappa-B activation and activating interleukin-1 beta processing. Modulates host resistance to DNA virus infection, probably by inducing the cleavage of and inactivating CGAS in presence of cytoplasmic double-stranded DNA. May have a regulating effect on the function as inflammasome adapter. Its function is as follows. Seems to inhibit inflammasome-mediated maturation of interleukin-1 beta. In Homo sapiens (Human), this protein is Apoptosis-associated speck-like protein containing a CARD.